Consider the following 348-residue polypeptide: uncharacterized protein (348 aa).

This is an uncharacterized protein from Aquifex aeolicus (strain VF5).